The sequence spans 447 residues: Serine/threonine-protein phosphatase 2A 55 kDa regulatory subunit B gamma isoform (447 aa).

7 WD repeats span residues 22–61, 87–128, 171–209, 220–260, 279–317, 334–375, and 410–446; these read TEADIISTVEFNHTGELLATGDKGGRVVIFQREPESKNAP, EIEE…KRPE, GHTYHINSISVNSDCETYMSADDLRINLWHLAITDRSFN, DLTE…LCDK, EIISSVSDVKFSHSGRYMLTRDYLTVKVWDLNMEARPIE, ENDC…DVTL, and DFTKKILHTAWHPAENIIAIAATNNLYIFQDKVNSDM.

The protein belongs to the phosphatase 2A regulatory subunit B family. PP2A consists of a common heterodimeric core enzyme, composed of a 36 kDa catalytic subunit (subunit C) and a 65 kDa constant regulatory subunit (PR65 or subunit A), that associates with a variety of regulatory subunits. Proteins that associate with the core dimer include three families of regulatory subunits B (the R2/B/PR55/B55, R3/B''/PR72/PR130/PR59 and R5/B'/B56 families), the 48 kDa variable regulatory subunit, viral proteins, and cell signaling molecules. Interacts with IER5.

In terms of biological role, the B regulatory subunit might modulate substrate selectivity and catalytic activity, and might also direct the localization of the catalytic enzyme to a particular subcellular compartment. The sequence is that of Serine/threonine-protein phosphatase 2A 55 kDa regulatory subunit B gamma isoform (PPP2R2C) from Homo sapiens (Human).